Here is a 461-residue protein sequence, read N- to C-terminus: Cysteine--tRNA ligase (461 aa).

C30 provides a ligand contact to Zn(2+). The short motif at 32–42 is the 'HIGH' region element; it reads VTVYDLCHIGH. Positions 211, 236, and 240 each coordinate Zn(2+). The 'KMSKS' region signature appears at 268 to 272; it reads KMSKS. K271 is an ATP binding site.

This sequence belongs to the class-I aminoacyl-tRNA synthetase family. In terms of assembly, monomer. Requires Zn(2+) as cofactor.

The protein resides in the cytoplasm. It catalyses the reaction tRNA(Cys) + L-cysteine + ATP = L-cysteinyl-tRNA(Cys) + AMP + diphosphate. The chain is Cysteine--tRNA ligase from Shewanella sp. (strain MR-7).